Reading from the N-terminus, the 127-residue chain is UPF0212 protein VNG_1264C (127 aa).

The protein belongs to the UPF0212 family.

This Halobacterium salinarum (strain ATCC 700922 / JCM 11081 / NRC-1) (Halobacterium halobium) protein is UPF0212 protein VNG_1264C.